A 136-amino-acid chain; its full sequence is Aspartate 1-decarboxylase (136 aa).

Ser-25 serves as the catalytic Schiff-base intermediate with substrate; via pyruvic acid. Ser-25 is subject to Pyruvic acid (Ser). Thr-57 provides a ligand contact to substrate. Catalysis depends on Tyr-58, which acts as the Proton donor. 73 to 75 contributes to the substrate binding site; sequence GAA.

The protein belongs to the PanD family. As to quaternary structure, heterooctamer of four alpha and four beta subunits. Pyruvate serves as cofactor. Is synthesized initially as an inactive proenzyme, which is activated by self-cleavage at a specific serine bond to produce a beta-subunit with a hydroxyl group at its C-terminus and an alpha-subunit with a pyruvoyl group at its N-terminus.

It localises to the cytoplasm. It carries out the reaction L-aspartate + H(+) = beta-alanine + CO2. Its pathway is cofactor biosynthesis; (R)-pantothenate biosynthesis; beta-alanine from L-aspartate: step 1/1. Catalyzes the pyruvoyl-dependent decarboxylation of aspartate to produce beta-alanine. In Mycolicibacterium smegmatis (strain ATCC 700084 / mc(2)155) (Mycobacterium smegmatis), this protein is Aspartate 1-decarboxylase.